Consider the following 474-residue polypeptide: Aspartyl/glutamyl-tRNA(Asn/Gln) amidotransferase subunit B (474 aa).

The protein belongs to the GatB/GatE family. GatB subfamily. In terms of assembly, heterotrimer of A, B and C subunits.

The enzyme catalyses L-glutamyl-tRNA(Gln) + L-glutamine + ATP + H2O = L-glutaminyl-tRNA(Gln) + L-glutamate + ADP + phosphate + H(+). It carries out the reaction L-aspartyl-tRNA(Asn) + L-glutamine + ATP + H2O = L-asparaginyl-tRNA(Asn) + L-glutamate + ADP + phosphate + 2 H(+). In terms of biological role, allows the formation of correctly charged Asn-tRNA(Asn) or Gln-tRNA(Gln) through the transamidation of misacylated Asp-tRNA(Asn) or Glu-tRNA(Gln) in organisms which lack either or both of asparaginyl-tRNA or glutaminyl-tRNA synthetases. The reaction takes place in the presence of glutamine and ATP through an activated phospho-Asp-tRNA(Asn) or phospho-Glu-tRNA(Gln). This Desulfotalea psychrophila (strain LSv54 / DSM 12343) protein is Aspartyl/glutamyl-tRNA(Asn/Gln) amidotransferase subunit B.